We begin with the raw amino-acid sequence, 109 residues long: Nucleoid-associated protein PM0205 (109 aa).

The protein belongs to the YbaB/EbfC family. Homodimer.

It is found in the cytoplasm. The protein localises to the nucleoid. In terms of biological role, binds to DNA and alters its conformation. May be involved in regulation of gene expression, nucleoid organization and DNA protection. This Pasteurella multocida (strain Pm70) protein is Nucleoid-associated protein PM0205.